We begin with the raw amino-acid sequence, 330 residues long: 2-methoxy-6-polyprenyl-1,4-benzoquinol methylase, mitochondrial (330 aa).

Residues 1 to 42 constitute a mitochondrion transit peptide; that stretch reads MAAPRSWALWSFCGCGWSRAVSGCRLPGLRSSSPRGPLGARL. Residues threonine 117, aspartate 171, and 199-200 each bind S-adenosyl-L-methionine; that span reads DA.

The protein belongs to the class I-like SAM-binding methyltransferase superfamily. MenG/UbiE family. As to quaternary structure, component of a multi-subunit COQ enzyme complex, composed of at least COQ3, COQ4, COQ5, COQ6, COQ7 and COQ9. Interacts with PYURF; the interaction is direct, stabilizes COQ5 protein and associates PYURF with COQ enzyme complex.

The protein resides in the mitochondrion inner membrane. The catalysed reaction is 2-methoxy-6-(all-trans-decaprenyl)benzene-1,4-diol + S-adenosyl-L-methionine = 5-methoxy-2-methyl-3-(all-trans-decaprenyl)benzene-1,4-diol + S-adenosyl-L-homocysteine + H(+). The protein operates within cofactor biosynthesis; ubiquinone biosynthesis. Methyltransferase required for the conversion of 2-decaprenyl-6-methoxy-1,4-benzoquinol (DDMQH2) to 2-decaprenyl-3-methyl-6-methoxy-1,4-benzoquinol (DMQH2). The protein is 2-methoxy-6-polyprenyl-1,4-benzoquinol methylase, mitochondrial of Bos taurus (Bovine).